The following is an 876-amino-acid chain: Alanine--tRNA ligase (876 aa).

Zn(2+) is bound by residues H564, H568, C666, and H670.

It belongs to the class-II aminoacyl-tRNA synthetase family. In terms of assembly, homotetramer. Zn(2+) is required as a cofactor.

It localises to the cytoplasm. It carries out the reaction tRNA(Ala) + L-alanine + ATP = L-alanyl-tRNA(Ala) + AMP + diphosphate. In terms of biological role, catalyzes the attachment of alanine to tRNA(Ala) in a two-step reaction: alanine is first activated by ATP to form Ala-AMP and then transferred to the acceptor end of tRNA(Ala). Also edits incorrectly charged Ser-tRNA(Ala) and Gly-tRNA(Ala) via its editing domain. The polypeptide is Alanine--tRNA ligase (Salmonella typhimurium (strain LT2 / SGSC1412 / ATCC 700720)).